We begin with the raw amino-acid sequence, 346 residues long: MSSFDYRSRLKELSARYNPEASILVNERMQSEDHYLDTDVVRYVKRSMRAVDDDYTKRTKDAGEAVKQHLNNELINVTYEYQGSVMTNTHIKGASDIDLLVICEKFEDTEINRVRDCLKTPYGYSNIQLSRLRNYELSFSLYRGDSREDLSNLRRQIESIMISKYTICDISKAKSVRITNQHLHRDVDIVTSSWFQSLEYVLDGMPKEEKGIKIYNKNLGFAEGPDFPFLSISRINQKSSESNGRLKRMIRFLKNVRTDSQKDIQLTSFDINAICYSIPVADYAYLDYKQLVYLLWSTMYHLWYDNKLDKLKSVVGDEYVFKGKPNKIEALKALEDDVFKIHQDLN.

It belongs to the CD-NTase family.

It catalyses the reaction 2 GTP = 3',3'-c-di-GMP + 2 diphosphate. Its function is as follows. Cyclic nucleotide synthase (second messenger synthase) of a CBASS antivirus system. CBASS (cyclic oligonucleotide-based antiphage signaling system) provides immunity against bacteriophage. The CD-NTase protein synthesizes cyclic nucleotides in response to infection; these serve as specific second messenger signals. The signals activate a diverse range of effectors, leading to bacterial cell death and thus abortive phage infection. A type I-D(GG) CBASS system. Functionally, cyclic dinucleotide synthase that catalyzes the synthesis of c-di-GMP, has no activity with other NTP substrates. The polypeptide is c-di-GMP synthase (Lachnospiraceae bacterium (strain RUG226)).